Here is a 225-residue protein sequence, read N- to C-terminus: Transmembrane protein 225 (225 aa).

Residues 1–8 (MVHVSNRS) lie on the Cytoplasmic side of the membrane. The helical transmembrane segment at 9–29 (IQGMNILFSSWAVVLMVMGIT) threads the bilayer. Over 30–72 (LDKWVELISEDERAKMNHSPWMMCCPALWPEDDLKVVRIMMTS) the chain is Extracellular. A helical transmembrane segment spans residues 73-93 (SLGLSFLLNLILGMKFTYLIP). Residues 94 to 99 (QNKYIQ) lie on the Cytoplasmic side of the membrane. A helical membrane pass occupies residues 100 to 120 (LFTTILSFFSGISLLWALILY). Topologically, residues 121-136 (HNKLKQGQSMHFSSYR) are extracellular. Residues 137–157 (ITWIMYTAYLNVFFLSVCGVL) form a helical membrane-spanning segment. Over 158–225 (SLLECKLSTS…VQTRHVTWAL (68 aa)) the chain is Cytoplasmic. Positions 219 to 223 (RHVTW) match the RVxF motif.

In terms of assembly, interacts (via RVxF motif) with PPP1CC.

Its subcellular location is the cytoplasmic vesicle. It localises to the secretory vesicle. The protein resides in the acrosome membrane. Its function is as follows. Probably inhibits protein phosphatase 1 (PP1) in sperm via binding to catalytic subunit PPP1CC. The protein is Transmembrane protein 225 (TMEM225) of Homo sapiens (Human).